Consider the following 624-residue polypeptide: Protein FAM234B (624 aa).

The segment at 1 to 91 is disordered; sequence MATVLSRALK…GFPSEPLGGL (91 aa). A Phosphoserine modification is found at S16. T26 is modified (phosphothreonine). A phosphoserine mark is found at S30, S33, and S63. A helical transmembrane segment spans residues 107–127; that stretch reads VFLLTLVISMVLVLLCAFLIP.

This sequence belongs to the FAM234 family.

It localises to the membrane. The protein localises to the golgi outpost. The protein resides in the cytoplasm. Its subcellular location is the cytoskeleton. It is found in the microtubule organizing center. The chain is Protein FAM234B from Mus musculus (Mouse).